The sequence spans 205 residues: Troponin I, cardiac muscle (205 aa).

The disordered stretch occupies residues 1–38 (MADQSGNAAPPPVRRRSSANYRAYATEPHAKKKSKISA). Alanine 2 bears the N-acetylalanine mark. Serine 5 is modified (phosphoserine). 2 positions are modified to phosphoserine; by PKA and PKD/PRKD1: serine 17 and serine 18. Position 21 is a phosphotyrosine (tyrosine 21). The residue at position 26 (threonine 26) is a Phosphothreonine; by STK4/MST1. An involved in binding TNC region spans residues 27–74 (EPHAKKKSKISASRKLQLKTLMLQIAKQELEREAVERRGEKGRALSTR). Serine 37 and serine 39 each carry phosphoserine; by PKC/PRKCE. At threonine 46 the chain carries Phosphothreonine; by STK4/MST1. At serine 72 the chain carries Phosphoserine. A Phosphothreonine modification is found at threonine 73. Positions 124–145 (NQKIFDLRGKFKRPTLRRVRIS) are involved in binding TNC and actin. Threonine 138 carries the post-translational modification Phosphothreonine; by STK4/MST1. Serine 145 carries the post-translational modification Phosphoserine; by PAK3. A Phosphothreonine modification is found at threonine 176. Position 194 is a phosphoserine (serine 194).

It belongs to the troponin I family. In terms of assembly, binds to actin and tropomyosin. Interacts with TRIM63. Interacts with STK4/MST1. Post-translationally, phosphorylated at Ser-17 and Ser-18 by PRKD1; phosphorylation reduces myofilament calcium sensitivity. Phosphorylated preferentially at Thr-26. Phosphorylation by STK4/MST1 alters its binding affinity to TNNC1 (cardiac Tn-C) and TNNT2 (cardiac Tn-T). Phosphorylated at Ser-37 and Ser-39 by PRKCE; phosphorylation increases myocardium contractile dysfunction.

Functionally, troponin I is the inhibitory subunit of troponin, the thin filament regulatory complex which confers calcium-sensitivity to striated muscle actomyosin ATPase activity. The polypeptide is Troponin I, cardiac muscle (TNNI3) (Equus caballus (Horse)).